The primary structure comprises 507 residues: Kunitz-type protease inhibitor 1 (507 aa).

A signal peptide spans 1–29 (MAGRRLARASISAVGVWLLCALGLQATEA). Residues 51–134 (GVPSFVLDTE…FAPKEGFINY (84 aa)) form the MANSC domain. A glycan (N-linked (GlcNAc...) asparagine) is linked at N229. Residues 244-294 (CLASYKVGRCRGSFPRWYYDPKEQICKSFTFGGCLGNKNNYLREEECMLAC) form the BPTI/Kunitz inhibitor 1 domain. 8 disulfide bridges follow: C244-C294, C253-C277, C269-C290, C320-C338, C332-C347, C369-C419, C378-C402, and C394-C415. In terms of domain architecture, LDL-receptor class A spans 312 to 348 (SCHATQFRCSNGCCIDGFLECDDTPDCPDGSDEATCE). Positions 369–419 (CAELPDTGFCKENIPRWYYNPFSERCARFTYGGCYGNKNNFEEEQQCLESC) constitute a BPTI/Kunitz inhibitor 2 domain. N501 carries an N-linked (GlcNAc...) asparagine glycan.

As to quaternary structure, interacts with HGFAC. Interacts with TMPRSS13; the interaction promotes the phosphorylation and cell membrane localization of TMPRSS13.

The protein resides in the secreted. Its subcellular location is the cytoplasm. It is found in the cell membrane. Functionally, inhibitor of HGFAC. Inhibits serine protease activity of ST14/matriptase in vitro. Inhibits serine protease activity of TMPRSS13, via the BPTI/Kunitz inhibitor 1 domain. This Mus musculus (Mouse) protein is Kunitz-type protease inhibitor 1 (Spint1).